The chain runs to 249 residues: Protein YIP5 (249 aa).

5 helical membrane passes run 87–107 (LYGPFWITTTVIQALFFSNSI), 131–151 (ASIIYGYTTIIAVLLWGILVW), 164–184 (LYGYANIVWLPVSLATPPFGL), 188–208 (LASHIVKYVLTGIGLLISIVF), and 228–248 (LLFGIIVFHCLLALSLQLIFF).

Belongs to the YIP1 family. In terms of assembly, interacts with the YIP1 family members yip1 and yip4, and several Rab GTPases. The C-terminal cysteines in the Rab GTPase ypt2 are essential for the interaction. Interacts with snx3.

Its subcellular location is the membrane. Functionally, possible role in vesicle-mediated transport. May be involved in proper membrane localization of Rab GTPases. The polypeptide is Protein YIP5 (Schizosaccharomyces pombe (strain 972 / ATCC 24843) (Fission yeast)).